We begin with the raw amino-acid sequence, 1012 residues long: Structural polyprotein (1012 aa).

Residue Asp30 coordinates a divalent metal cation. The 243-residue stretch at 513–755 (ADKGYEVVAN…AGRQYHLAMA (243 aa)) folds into the Peptidase S50 domain. Ser652 acts as the Nucleophile in catalysis. Lys692 is an active-site residue. Residues 969–1012 (AMELKHRNPRRAPPKPKPKPNAPTQRPPGRLGRWIRTVSDEDLE) form a disordered region. Basic residues predominate over residues 975 to 986 (RNPRRAPPKPKP). Residues 1003-1012 (IRTVSDEDLE) form an interaction with VP1 protein region.

Homotrimer. A central divalent metal stabilizes the VP2 trimer. Interacts with host ITGA4/ITGB1. In terms of assembly, homodimer. Interacts (via C-terminus) with VP1 in the cytoplasm. Interacts with VP2. Post-translationally, specific enzymatic cleavages yield mature proteins. The capsid assembly seems to be regulated by polyprotein processing. The protease VP4 cleaves itself off the polyprotein, thus releasing pre-VP2 and VP3 within the infected cell. During capsid assembly, the C-terminus of pre-VP2 is further processed by VP4, giving rise to VP2, the external capsid protein and three small peptides that all stay closely associated with the capsid.

The protein localises to the virion. Its subcellular location is the host cytoplasm. In terms of biological role, capsid protein VP2 self assembles to form an icosahedral capsid with a T=13 symmetry, about 70 nm in diameter, and consisting of 260 VP2 trimers. The capsid encapsulates the genomic dsRNA. VP2 is also involved in attachment and entry into the host cell by interacting with host ITGA4/ITGB1. The precursor of VP2 plays an important role in capsid assembly. First, pre-VP2 and VP2 oligomers assemble to form a procapsid. Then, the pre-VP2 intermediates may be processed into VP2 proteins by proteolytic cleavage mediated by VP4 to obtain the mature virion. The final capsid is composed of pentamers and hexamers but VP2 has a natural tendency to assemble into all-pentameric structures. Therefore pre-VP2 may be required to allow formation of the hexameric structures. Functionally, protease VP4 is a serine protease that cleaves the polyprotein into its final products. Pre-VP2 is first partially cleaved, and may be completely processed by VP4 upon capsid maturation. Its function is as follows. Capsid protein VP3 plays a key role in virion assembly by providing a scaffold for the capsid made of VP2. May self-assemble to form a T=4-like icosahedral inner-capsid composed of at least 180 trimers. Plays a role in genomic RNA packaging by recruiting VP1 into the capsid and interacting with the dsRNA genome segments to form a ribonucleoprotein complex. Additionally, the interaction of the VP3 C-terminal tail with VP1 removes the inherent structural blockade of the polymerase active site. Thus, VP3 can also function as a transcriptional activator. In terms of biological role, structural peptide 1 is a small peptide derived from pre-VP2 C-terminus. It destabilizes and perforates cell membranes, suggesting a role during entry. Structural peptide 2 is a small peptide derived from pVP2 C-terminus. It is not essential for the virus viability, but viral growth is affected when missing. Functionally, structural peptide 3 is a small peptide derived from pVP2 C-terminus. It is not essential for the virus viability, but viral growth is affected when missing. Its function is as follows. Structural peptide 4 is a small peptide derived from pVP2 C-terminus. It is essential for the virus viability. This is Structural polyprotein from Avian infectious bursal disease virus (strain STC) (IBDV).